A 289-amino-acid chain; its full sequence is Probable ABC transporter permease protein BRA0749/BS1330_II0742 (289 aa).

6 helical membrane passes run 9–29, 70–90, 99–119, 144–166, 213–233, and 260–280; these read FLILPSLLLAAVVIFWPVVHL, VWTVAVVGGALVLSIPVAIIL, VARVIIMLPWAVSLTMTAIVW, IQWLASAATAFPMQILVGILVTV, IAIVLNTIYVFNSFPIIWVMT, and EASAVSLIMLAILLVFTVIYI. The ABC transmembrane type-1 domain maps to 65-279; it reads LWRTAVWTVA…AILLVFTVIY (215 aa).

This sequence belongs to the binding-protein-dependent transport system permease family. The complex is composed of two ATP-binding proteins (BRA0745), two transmembrane proteins (BRA0749) and a solute-binding protein (BRA0748).

It localises to the cell inner membrane. In terms of biological role, probably part of an ABC transporter complex. Probably responsible for the translocation of the substrate across the membrane. The protein is Probable ABC transporter permease protein BRA0749/BS1330_II0742 of Brucella suis biovar 1 (strain 1330).